We begin with the raw amino-acid sequence, 500 residues long: Probable cytosol aminopeptidase (500 aa).

Residues K265 and D270 each contribute to the Mn(2+) site. Residue K277 is part of the active site. The Mn(2+) site is built by D288, D347, and E349. Residue R351 is part of the active site.

The protein belongs to the peptidase M17 family. Requires Mn(2+) as cofactor.

The protein resides in the cytoplasm. It carries out the reaction Release of an N-terminal amino acid, Xaa-|-Yaa-, in which Xaa is preferably Leu, but may be other amino acids including Pro although not Arg or Lys, and Yaa may be Pro. Amino acid amides and methyl esters are also readily hydrolyzed, but rates on arylamides are exceedingly low.. The enzyme catalyses Release of an N-terminal amino acid, preferentially leucine, but not glutamic or aspartic acids.. Presumably involved in the processing and regular turnover of intracellular proteins. Catalyzes the removal of unsubstituted N-terminal amino acids from various peptides. This chain is Probable cytosol aminopeptidase, found in Rickettsia peacockii (strain Rustic).